We begin with the raw amino-acid sequence, 200 residues long: Small ribosomal subunit protein uS5 (200 aa).

Residues 1–12 (MGRPRTSQTRGQ) are compositionally biased toward polar residues. A disordered region spans residues 1–49 (MGRPRTSQTRGQGPSGATGGNPRGGGSTTRERDARGARPGERDGGSEIQ). Gly residues predominate over residues 13 to 27 (GPSGATGGNPRGGGS). Positions 29-49 (TRERDARGARPGERDGGSEIQ) are enriched in basic and acidic residues. An S5 DRBM domain is found at 48–111 (IQDRVVQIRR…EKARHAMFDV (64 aa)).

It belongs to the universal ribosomal protein uS5 family. Part of the 30S ribosomal subunit. Contacts proteins S4 and S8.

Its function is as follows. With S4 and S12 plays an important role in translational accuracy. Functionally, located at the back of the 30S subunit body where it stabilizes the conformation of the head with respect to the body. This chain is Small ribosomal subunit protein uS5, found in Rubrobacter xylanophilus (strain DSM 9941 / JCM 11954 / NBRC 16129 / PRD-1).